We begin with the raw amino-acid sequence, 141 residues long: Prefoldin subunit alpha (141 aa).

This sequence belongs to the prefoldin subunit alpha family. As to quaternary structure, heterohexamer of two alpha and four beta subunits.

Its subcellular location is the cytoplasm. Molecular chaperone capable of stabilizing a range of proteins. Seems to fulfill an ATP-independent, HSP70-like function in archaeal de novo protein folding. This is Prefoldin subunit alpha (pfdA) from Methanothermobacter thermautotrophicus (strain ATCC 29096 / DSM 1053 / JCM 10044 / NBRC 100330 / Delta H) (Methanobacterium thermoautotrophicum).